Here is a 585-residue protein sequence, read N- to C-terminus: NADP-reducing hydrogenase subunit HndD (585 aa).

Residues 2-85 form the 2Fe-2S ferredoxin-type domain; sequence SMLTITIDGK…NMVVKTNSLR (84 aa). Cys-36, Cys-52, Cys-55, and Cys-69 together coordinate [2Fe-2S] cluster. One can recognise a 4Fe-4S His(Cys)3-ligated-type domain in the interval 85-124; that stretch reads RVLNARRTVLELLLSDHPKDCLVCAKSGECELQTLAERFG. [4Fe-4S] cluster is bound by residues His-101, Cys-105, Cys-108, and Cys-114. 4Fe-4S ferredoxin-type domains are found at residues 144 to 174 and 185 to 216; these read ASII…VLSG and PAFE…EHEY.

In terms of assembly, heterotetramer composed of HndA, HndB, HndC and HndD subunits. HndD is probably the hydrogenase subunit. The cofactor is [4Fe-4S] cluster.

The enzyme catalyses H2 + NADP(+) = NADPH + H(+). Its activity is regulated as follows. Inhibited by oxygen. Its function is as follows. Catalyzes the reduction of NADP in the presence of molecular H(2) to yield NADPH. The polypeptide is NADP-reducing hydrogenase subunit HndD (hndD) (Solidesulfovibrio fructosivorans (Desulfovibrio fructosivorans)).